A 102-amino-acid polypeptide reads, in one-letter code: NADH-quinone oxidoreductase subunit K (102 aa).

Transmembrane regions (helical) follow at residues 6–26, 30–50, and 62–82; these read LEHGLAVAGILFCLGLVGLMV, ILFVLMSLEVMMNASALAFIV, and VMFILVISLAAAEASIGLAIL.

This sequence belongs to the complex I subunit 4L family. As to quaternary structure, NDH-1 is composed of 13 different subunits. Subunits NuoA, H, J, K, L, M, N constitute the membrane sector of the complex.

It localises to the cell inner membrane. The enzyme catalyses a quinone + NADH + 5 H(+)(in) = a quinol + NAD(+) + 4 H(+)(out). Its function is as follows. NDH-1 shuttles electrons from NADH, via FMN and iron-sulfur (Fe-S) centers, to quinones in the respiratory chain. The immediate electron acceptor for the enzyme in this species is believed to be ubiquinone. Couples the redox reaction to proton translocation (for every two electrons transferred, four hydrogen ions are translocated across the cytoplasmic membrane), and thus conserves the redox energy in a proton gradient. The sequence is that of NADH-quinone oxidoreductase subunit K from Pseudomonas putida (strain W619).